Reading from the N-terminus, the 504-residue chain is ATP synthase subunit alpha (504 aa).

171–178 (GDRATGKT) contacts ATP.

Belongs to the ATPase alpha/beta chains family. F-type ATPases have 2 components, CF(1) - the catalytic core - and CF(0) - the membrane proton channel. CF(1) has five subunits: alpha(3), beta(3), gamma(1), delta(1), epsilon(1). CF(0) has three main subunits: a(1), b(2) and c(9-12). The alpha and beta chains form an alternating ring which encloses part of the gamma chain. CF(1) is attached to CF(0) by a central stalk formed by the gamma and epsilon chains, while a peripheral stalk is formed by the delta and b chains.

Its subcellular location is the cell inner membrane. It catalyses the reaction ATP + H2O + 4 H(+)(in) = ADP + phosphate + 5 H(+)(out). Functionally, produces ATP from ADP in the presence of a proton gradient across the membrane. The alpha chain is a regulatory subunit. This chain is ATP synthase subunit alpha, found in Sulfurihydrogenibium sp. (strain YO3AOP1).